A 187-amino-acid chain; its full sequence is ATP synthase subunit b (187 aa).

A helical transmembrane segment spans residues 31-51; the sequence is VAIMGLAIFVLFLILSYLLFN.

This sequence belongs to the ATPase B chain family. As to quaternary structure, F-type ATPases have 2 components, F(1) - the catalytic core - and F(0) - the membrane proton channel. F(1) has five subunits: alpha(3), beta(3), gamma(1), delta(1), epsilon(1). F(0) has three main subunits: a(1), b(2) and c(10-14). The alpha and beta chains form an alternating ring which encloses part of the gamma chain. F(1) is attached to F(0) by a central stalk formed by the gamma and epsilon chains, while a peripheral stalk is formed by the delta and b chains.

It localises to the cell membrane. Functionally, f(1)F(0) ATP synthase produces ATP from ADP in the presence of a proton or sodium gradient. F-type ATPases consist of two structural domains, F(1) containing the extramembraneous catalytic core and F(0) containing the membrane proton channel, linked together by a central stalk and a peripheral stalk. During catalysis, ATP synthesis in the catalytic domain of F(1) is coupled via a rotary mechanism of the central stalk subunits to proton translocation. Component of the F(0) channel, it forms part of the peripheral stalk, linking F(1) to F(0). This chain is ATP synthase subunit b, found in Lachnoclostridium phytofermentans (strain ATCC 700394 / DSM 18823 / ISDg) (Clostridium phytofermentans).